An 899-amino-acid polypeptide reads, in one-letter code: Protein translocase subunit SecA (899 aa).

ATP is bound by residues glutamine 87, 105 to 109, and aspartate 516; that span reads GEGKT. Cysteine 884, cysteine 886, cysteine 895, and histidine 896 together coordinate Zn(2+).

This sequence belongs to the SecA family. As to quaternary structure, monomer and homodimer. Part of the essential Sec protein translocation apparatus which comprises SecA, SecYEG and auxiliary proteins SecDF. Other proteins may also be involved. It depends on Zn(2+) as a cofactor.

It localises to the cell inner membrane. The protein resides in the cytoplasm. It catalyses the reaction ATP + H2O + cellular proteinSide 1 = ADP + phosphate + cellular proteinSide 2.. In terms of biological role, part of the Sec protein translocase complex. Interacts with the SecYEG preprotein conducting channel. Has a central role in coupling the hydrolysis of ATP to the transfer of proteins into and across the cell membrane, serving as an ATP-driven molecular motor driving the stepwise translocation of polypeptide chains across the membrane. The chain is Protein translocase subunit SecA from Borreliella burgdorferi (strain ZS7) (Borrelia burgdorferi).